A 111-amino-acid polypeptide reads, in one-letter code: Cytochrome c6 (111 aa).

An N-terminal signal peptide occupies residues methionine 1–alanine 25. Cysteine 39, cysteine 42, histidine 43, and methionine 83 together coordinate heme c.

It belongs to the cytochrome c family. PetJ subfamily. In terms of assembly, monomer. Post-translationally, binds 1 heme c group covalently per subunit.

Its subcellular location is the cellular thylakoid lumen. Its function is as follows. Functions as an electron carrier between membrane-bound cytochrome b6-f and photosystem I in oxygenic photosynthesis. The polypeptide is Cytochrome c6 (Rippkaea orientalis (strain PCC 8801 / RF-1) (Cyanothece sp. (strain PCC 8801))).